The following is a 337-amino-acid chain: Cysteinyl leukotriene receptor 1 (337 aa).

Residues 1–28 (MDETGNLTVSSATCHDTIDDFRNQVYST) are Extracellular-facing. Asn-6 carries an N-linked (GlcNAc...) asparagine glycan. Residues 29 to 49 (LYSMISVVGFFGNGFVLYVLI) form a helical membrane-spanning segment. Residues 50–57 (KTYHKKSA) lie on the Cytoplasmic side of the membrane. The helical transmembrane segment at 58–78 (FQVYMINLAVADLLCVCTLPL) threads the bilayer. Over 79–106 (RVVYYVHKGIWLFGDFLCRLSTYALYVN) the chain is Extracellular. An intrachain disulfide couples Cys-96 to Cys-173. A helical membrane pass occupies residues 107–127 (LYCSIFFMTAMSFFRCIAIVF). The Cytoplasmic portion of the chain corresponds to 128-141 (PVQNINLVTQKKAR). The helical transmembrane segment at 142–162 (FVCVGIWIFVILTSSPFLMAK) threads the bilayer. The Extracellular portion of the chain corresponds to 163 to 193 (PQKDEKNNTKCFEPPQDNQTKNHVLVLHYVS). N-linked (GlcNAc...) asparagine glycosylation is found at Asn-169 and Asn-180. The helical transmembrane segment at 194-214 (LFVGFIIPFVIIIVCYTMIIL) threads the bilayer. The Cytoplasmic segment spans residues 215–230 (TLLKKSMKKNLSSHKK). The helical transmembrane segment at 231–251 (AIGMIMVVTAAFLVSFMPYHI) threads the bilayer. Over 252–276 (QRTIHLHFLHNETKPCDSVLRMQKS) the chain is Extracellular. An N-linked (GlcNAc...) asparagine glycan is attached at Asn-262. A helical membrane pass occupies residues 277-297 (VVITLSLAASNCCFDPLLYFF). Over 298-337 (SGGNFRKRLSTFRKHSLSSVTYVPRKKASLPEKGEEICKV) the chain is Cytoplasmic.

The protein belongs to the G-protein coupled receptor 1 family. Widely expressed, with highest levels in spleen and peripheral blood leukocytes. Lower expression in several tissues, such as lung (mostly in smooth muscle bundles and alveolar macrophages), placenta, small intestine, pancreas, colon and heart.

The protein localises to the cell membrane. Functionally, receptor for cysteinyl leukotrienes mediating bronchoconstriction of individuals with and without asthma. Stimulation by LTD4 results in the contraction and proliferation of smooth muscle, edema, eosinophil migration and damage to the mucus layer in the lung. This response is mediated via a G-protein that activates a phosphatidylinositol-calcium second messenger system. The rank order of affinities for the leukotrienes is LTD4 &gt;&gt; LTE4 = LTC4 &gt;&gt; LTB4. In Homo sapiens (Human), this protein is Cysteinyl leukotriene receptor 1 (CYSLTR1).